A 162-amino-acid chain; its full sequence is Ecotin (162 aa).

Positions 1-18 are cleaved as a signal peptide; that stretch reads MKMFVPAVVFAASASAWA. Cysteine 70 and cysteine 107 are oxidised to a cystine.

It belongs to the protease inhibitor I11 (ecotin) family. Homodimer.

Its subcellular location is the periplasm. Its function is as follows. General inhibitor of pancreatic serine proteases: inhibits chymotrypsin, trypsin, elastases, factor X, kallikrein as well as a variety of other proteases. This chain is Ecotin, found in Salmonella arizonae (strain ATCC BAA-731 / CDC346-86 / RSK2980).